The primary structure comprises 184 residues: MTSFEDADTEETVTCLQMTVYHPGQLQCGIFQSISFNREKLPSSEVVKFGRNSNICHYTFQDKQVSRVQFSLQLFKKFNSSVLSFEIKNMSKKTNLIVDSRELGYLNKMDLPYRCMVRFGEYQFLMEKEDGESLEFFETQFILSPRSLLQENNWPPHRPIPEYGTYSLCSSQSSSPTEMDENES.

Threonine 9 bears the Phosphothreonine; by ALPK1 mark. The 57-residue stretch at 47–103 (VKFGRNSNICHYTFQDKQVSRVQFSLQLFKKFNSSVLSFEIKNMSKKTNLIVDSREL) folds into the FHA domain. The disordered stretch occupies residues 165–184 (TYSLCSSQSSSPTEMDENES). The segment covering 167–177 (SLCSSQSSSPT) has biased composition (polar residues).

This sequence belongs to the TIFA family. Homooligomer; homooligomerizes following phosphorylation at Thr-9. Interacts with IRAK1, TRAF2 and TRAF6. Interacts with TIFAB; binding to TIFAB inhibits TRAF6 activation, possibly by inducing a conformational change in TIFA. Interacts with ZCCHC11; binding to ZCCHC11 suppresses the TRAF6-dependent activation of NF-kappa-B. Post-translationally, phosphorylated at Thr-9 following detection of ADP-D-glycero-beta-D-manno-heptose (ADP-Heptose) by ALPK1. Phosphorylation at Thr-9 by ALPK1 leads to the formation of an intermolecular binding between the FHA domain and phosphorylated Thr-9, promoting TIFA oligomerization and TIFA-mediated NF-kappa-B activation.

It is found in the cytoplasm. Functionally, adapter molecule that plays a key role in the activation of pro-inflammatory NF-kappa-B signaling following detection of bacterial pathogen-associated molecular pattern metabolites (PAMPs). Promotes activation of an innate immune response by inducing the oligomerization and polyubiquitination of TRAF6, which leads to the activation of TAK1 and IKK through a proteasome-independent mechanism. TIFA-dependent innate immune response is triggered by ADP-D-glycero-beta-D-manno-heptose (ADP-Heptose), a potent PAMP present in all Gram-negative and some Gram-positive bacteria: ADP-Heptose is recognized by ALPK1, which phosphorylates TIFA at Thr-9, leading to TIFA homooligomerization and subsequent activation of pro-inflammatory NF-kappa-B signaling. The protein is TRAF-interacting protein with FHA domain-containing protein A of Homo sapiens (Human).